Here is a 965-residue protein sequence, read N- to C-terminus: Glycine dehydrogenase (decarboxylating) 1 (965 aa).

Residue lysine 713 is modified to N6-(pyridoxal phosphate)lysine.

This sequence belongs to the GcvP family. In terms of assembly, the glycine cleavage system is composed of four proteins: P, T, L and H. Pyridoxal 5'-phosphate serves as cofactor.

It carries out the reaction N(6)-[(R)-lipoyl]-L-lysyl-[glycine-cleavage complex H protein] + glycine + H(+) = N(6)-[(R)-S(8)-aminomethyldihydrolipoyl]-L-lysyl-[glycine-cleavage complex H protein] + CO2. In terms of biological role, the glycine cleavage system catalyzes the degradation of glycine. The P protein binds the alpha-amino group of glycine through its pyridoxal phosphate cofactor; CO(2) is released and the remaining methylamine moiety is then transferred to the lipoamide cofactor of the H protein. The sequence is that of Glycine dehydrogenase (decarboxylating) 1 from Colwellia psychrerythraea (strain 34H / ATCC BAA-681) (Vibrio psychroerythus).